Consider the following 438-residue polypeptide: MRVLLVGGGGREHAIGEALVRGGAELYVVSKHKNPGLARLARGYGLAKETDIKKVLEYAEKFGVELAFIGPEAPLEKGIVDALEENGIPAVGPSREAAKLETDKAFARTFMERNEIPGRKVFRVFTDVSKMRSWVDDFGRPVVVKPIGLTGGKGVKVVGYQLRDNEEAKSYAEELIRRDGRVLIEERTNGVEFTFQVFTDGKRVLPMPLAQDYPHAYENDEGPITGGMGSYSCSNGLLPFVTREDYEKALETLKATVEAMRKEGTPYKGILYGQFMLSKGGPVLIEYNARFGDPEAINVLPLLETSLLEVAEGIVDGNLQGAEFEKKATVVKYLAPKGYPTNPVRGVKVEVNEKAVEEVGARLYYASIDENFTLLGSRAIAVVGIADSLEEAERIAKSVIPHVKGELFYRRDVGTRKSVEKRIELMKEFGKEFEPNPC.

In terms of domain architecture, ATP-grasp spans 108–316 (RTFMERNEIP…LLEVAEGIVD (209 aa)). 135-194 (VDDFGRPVVVKPIGLTGGKGVKVVGYQLRDNEEAKSYAEELIRRDGRVLIEERTNGVEFT) serves as a coordination point for ATP. Mg(2+)-binding residues include glutamine 274, glutamate 286, and asparagine 288. Residues glutamine 274, glutamate 286, and asparagine 288 each coordinate Mn(2+).

Belongs to the GARS family. Requires Mg(2+) as cofactor. Mn(2+) is required as a cofactor.

It carries out the reaction 5-phospho-beta-D-ribosylamine + glycine + ATP = N(1)-(5-phospho-beta-D-ribosyl)glycinamide + ADP + phosphate + H(+). It functions in the pathway purine metabolism; IMP biosynthesis via de novo pathway; N(1)-(5-phospho-D-ribosyl)glycinamide from 5-phospho-alpha-D-ribose 1-diphosphate: step 2/2. The chain is Phosphoribosylamine--glycine ligase from Thermococcus gammatolerans (strain DSM 15229 / JCM 11827 / EJ3).